Here is a 239-residue protein sequence, read N- to C-terminus: Hydroxyacylglutathione hydrolase (239 aa).

Zn(2+) is bound by residues His-54, His-56, Asp-58, His-59, His-112, Asp-131, and His-169.

This sequence belongs to the metallo-beta-lactamase superfamily. Glyoxalase II family. As to quaternary structure, monomer. Zn(2+) is required as a cofactor.

The enzyme catalyses an S-(2-hydroxyacyl)glutathione + H2O = a 2-hydroxy carboxylate + glutathione + H(+). It participates in secondary metabolite metabolism; methylglyoxal degradation; (R)-lactate from methylglyoxal: step 2/2. Functionally, thiolesterase that catalyzes the hydrolysis of S-D-lactoyl-glutathione to form glutathione and D-lactic acid. This chain is Hydroxyacylglutathione hydrolase, found in Pelagibacter ubique (strain HTCC1062).